The sequence spans 201 residues: High mobility group protein homolog 068R (201 aa).

2 consecutive DNA-binding regions (HMG box) follow at residues 70-138 (PKRN…ELEK) and 143-201 (TPSK…KAAK).

Belongs to the IIV-6 401R family.

The protein localises to the host nucleus. The polypeptide is High mobility group protein homolog 068R (Invertebrate iridescent virus 3 (IIV-3)).